Consider the following 119-residue polypeptide: Protein TusC (119 aa).

Belongs to the DsrF/TusC family. Heterohexamer, formed by a dimer of trimers. The hexameric TusBCD complex contains 2 copies each of TusB, TusC and TusD. The TusBCD complex interacts with TusE.

The protein resides in the cytoplasm. Part of a sulfur-relay system required for 2-thiolation of 5-methylaminomethyl-2-thiouridine (mnm(5)s(2)U) at tRNA wobble positions. The chain is Protein TusC from Shigella dysenteriae serotype 1 (strain Sd197).